We begin with the raw amino-acid sequence, 453 residues long: Chromosomal replication initiator protein DnaA (453 aa).

Residues 1-78 are domain I, interacts with DnaA modulators; the sequence is MTENEQLFWN…FEIFNAEITA (78 aa). Positions 78–112 are domain II; sequence ANYVSNDLHLQETSFSNYQQSSNEVNTLPIRKIDS. The domain III, AAA+ region stretch occupies residues 113-331; sequence NLKEKYTFAN…GALKNISLVA (219 aa). ATP-binding residues include glycine 157, glycine 159, lysine 160, and threonine 161. Positions 332-453 are domain IV, binds dsDNA; it reads DFKHAKTITV…EIETIKNKIR (122 aa).

It belongs to the DnaA family. In terms of assembly, oligomerizes as a right-handed, spiral filament on DNA at oriC.

Its subcellular location is the cytoplasm. In terms of biological role, plays an essential role in the initiation and regulation of chromosomal replication. ATP-DnaA binds to the origin of replication (oriC) to initiate formation of the DNA replication initiation complex once per cell cycle. Binds the DnaA box (a 9 base pair repeat at the origin) and separates the double-stranded (ds)DNA. Forms a right-handed helical filament on oriC DNA; dsDNA binds to the exterior of the filament while single-stranded (ss)DNA is stabiized in the filament's interior. The ATP-DnaA-oriC complex binds and stabilizes one strand of the AT-rich DNA unwinding element (DUE), permitting loading of DNA polymerase. After initiation quickly degrades to an ADP-DnaA complex that is not apt for DNA replication. Binds acidic phospholipids. The chain is Chromosomal replication initiator protein DnaA from Streptococcus agalactiae serotype Ia (strain ATCC 27591 / A909 / CDC SS700).